The following is a 101-amino-acid chain: Replication restart protein PriB (101 aa).

The region spanning 1–101 is the SSB domain; sequence MTTNSLVLSG…IHAENVELKT (101 aa).

This sequence belongs to the PriB family. In terms of assembly, homodimer. Interacts with PriA and DnaT. Component of the replication restart primosome. Primosome assembly occurs via a 'hand-off' mechanism. PriA binds to replication forks, subsequently PriB then DnaT bind; DnaT then displaces ssDNA to generate the helicase loading substrate.

In terms of biological role, involved in the restart of stalled replication forks, which reloads the replicative helicase on sites other than the origin of replication; the PriA-PriB pathway is the major replication restart pathway. During primosome assembly it facilitates complex formation between PriA and DnaT on DNA; stabilizes PriA on DNA. Stimulates the DNA unwinding activity of PriA helicase. The polypeptide is Replication restart protein PriB (Shewanella putrefaciens (strain CN-32 / ATCC BAA-453)).